Here is a 425-residue protein sequence, read N- to C-terminus: Serine--tRNA ligase (425 aa).

L-serine is bound at residue T230–E232. R261 to E263 is an ATP binding site. Residue E284 coordinates L-serine. E348 to S351 provides a ligand contact to ATP. S385 lines the L-serine pocket.

The protein belongs to the class-II aminoacyl-tRNA synthetase family. Type-1 seryl-tRNA synthetase subfamily. In terms of assembly, homodimer. The tRNA molecule binds across the dimer.

Its subcellular location is the cytoplasm. The enzyme catalyses tRNA(Ser) + L-serine + ATP = L-seryl-tRNA(Ser) + AMP + diphosphate + H(+). The catalysed reaction is tRNA(Sec) + L-serine + ATP = L-seryl-tRNA(Sec) + AMP + diphosphate + H(+). The protein operates within aminoacyl-tRNA biosynthesis; selenocysteinyl-tRNA(Sec) biosynthesis; L-seryl-tRNA(Sec) from L-serine and tRNA(Sec): step 1/1. In terms of biological role, catalyzes the attachment of serine to tRNA(Ser). Is also able to aminoacylate tRNA(Sec) with serine, to form the misacylated tRNA L-seryl-tRNA(Sec), which will be further converted into selenocysteinyl-tRNA(Sec). The protein is Serine--tRNA ligase of Wolbachia sp. subsp. Brugia malayi (strain TRS).